Here is a 470-residue protein sequence, read N- to C-terminus: Ribulose bisphosphate carboxylase large chain (470 aa).

Residues N118 and T168 each coordinate substrate. The active-site Proton acceptor is K170. A substrate-binding site is contributed by K172. Mg(2+)-binding residues include K196, D198, and E199. K196 carries the post-translational modification N6-carboxylysine. Residue H289 is the Proton acceptor of the active site. Substrate is bound by residues R290, H322, and S374. The short motif at 459–465 (EIKFEFD) is the Interacts with RbcX2 element.

It belongs to the RuBisCO large chain family. Type I subfamily. In terms of assembly, heterohexadecamer of 8 large chains and 8 small chains; disulfide-linked. The disulfide link is formed within the large subunit homodimers. Mg(2+) serves as cofactor. The disulfide bond which can form in the large chain dimeric partners within the hexadecamer appears to be associated with oxidative stress and protein turnover.

It is found in the carboxysome. The enzyme catalyses 2 (2R)-3-phosphoglycerate + 2 H(+) = D-ribulose 1,5-bisphosphate + CO2 + H2O. It catalyses the reaction D-ribulose 1,5-bisphosphate + O2 = 2-phosphoglycolate + (2R)-3-phosphoglycerate + 2 H(+). Its function is as follows. RuBisCO catalyzes two reactions: the carboxylation of D-ribulose 1,5-bisphosphate, the primary event in carbon dioxide fixation, as well as the oxidative fragmentation of the pentose substrate in the photorespiration process. Both reactions occur simultaneously and in competition at the same active site. This chain is Ribulose bisphosphate carboxylase large chain, found in Picosynechococcus sp. (strain ATCC 27264 / PCC 7002 / PR-6) (Agmenellum quadruplicatum).